The chain runs to 269 residues: MINAQTQLYGVIGFPVKHSLSPVFQNALIRYAGLNAVYLAFEINPEELKKAFEGFKALKVKGINVTVPFKEEIIPLLDYVEDTAKEIGAVNTVKFENGKAYGYNTDWIGFLKSLKSLIPEVKEKSILVLGAGGASRAVIYALVKEGAKVFLWNRTKEKAIKLAQKFPLEVVNSPEEVIDKVQVIVNTTSVGLKDKDPEIFNYDLIKKDHVVVDIIYKETKLLKKAKEKGAKLFDGLPMLLWQGIEAFKIWNGCEVPYSVAERSVRDLRG.

Shikimate contacts are provided by residues 19 to 21 (SLS) and threonine 66. Lysine 70 serves as the catalytic Proton acceptor. Aspartate 82 is an NADP(+) binding site. Asparagine 91 and aspartate 106 together coordinate shikimate. NADP(+) contacts are provided by residues 130–134 (GAGGA), 153–158 (NRTKEK), and isoleucine 214. Tyrosine 216 provides a ligand contact to shikimate. Residue glycine 235 coordinates NADP(+). Glutamine 242 lines the shikimate pocket.

Belongs to the shikimate dehydrogenase family. As to quaternary structure, homodimer.

The catalysed reaction is shikimate + NADP(+) = 3-dehydroshikimate + NADPH + H(+). The protein operates within metabolic intermediate biosynthesis; chorismate biosynthesis; chorismate from D-erythrose 4-phosphate and phosphoenolpyruvate: step 4/7. Involved in the biosynthesis of the chorismate, which leads to the biosynthesis of aromatic amino acids. Catalyzes the reversible NADPH linked reduction of 3-dehydroshikimate (DHSA) to yield shikimate (SA). The polypeptide is Shikimate dehydrogenase (NADP(+)) (Aquifex aeolicus (strain VF5)).